Reading from the N-terminus, the 201-residue chain is Large ribosomal subunit protein uL4 (201 aa).

Residues A45 to G71 are disordered.

Belongs to the universal ribosomal protein uL4 family. As to quaternary structure, part of the 50S ribosomal subunit.

Its function is as follows. One of the primary rRNA binding proteins, this protein initially binds near the 5'-end of the 23S rRNA. It is important during the early stages of 50S assembly. It makes multiple contacts with different domains of the 23S rRNA in the assembled 50S subunit and ribosome. Forms part of the polypeptide exit tunnel. In Shewanella pealeana (strain ATCC 700345 / ANG-SQ1), this protein is Large ribosomal subunit protein uL4.